The sequence spans 82 residues: Musculoskeletal embryonic nuclear protein 1 (82 aa).

Residues 1–34 (MSQAGAQEAPIKKKRPPVKEEDLKGARGNLTKNQ) are disordered. The residue at position 2 (Ser-2) is a Phosphoserine. The short motif at 10–18 (PIKKKRPPV) is the Nuclear localization signal element.

Belongs to the MUSTN1 family.

The protein resides in the nucleus. It is found in the cytoplasm. The protein localises to the secreted. Its subcellular location is the extracellular space. In terms of biological role, required for chondrocyte development and proliferation. Plays a role in myoblast differentiation and fusion. Modulates skeletal muscle extracellular matrix composition. Plays a role in skeletal muscle function. Plays a role in glucose homeostasis. This is Musculoskeletal embryonic nuclear protein 1 (MUSTN1) from Bos taurus (Bovine).